The following is a 178-amino-acid chain: Epididymal-specific lipocalin-9 (178 aa).

The first 16 residues, 1-16, serve as a signal peptide directing secretion; sequence MVLLLVLGLVLSLATA. N-linked (GlcNAc...) asparagine glycans are attached at residues N46, N68, and N129. A disulfide bridge connects residues C83 and C176.

This sequence belongs to the calycin superfamily. Lipocalin family. As to expression, expressed in epididymis. Not detected in all other tissues tested.

Its subcellular location is the secreted. The chain is Epididymal-specific lipocalin-9 (Lcn9) from Mus musculus (Mouse).